Here is a 287-residue protein sequence, read N- to C-terminus: Glycine--tRNA ligase alpha subunit (287 aa).

Belongs to the class-II aminoacyl-tRNA synthetase family. Tetramer of two alpha and two beta subunits.

It localises to the cytoplasm. The catalysed reaction is tRNA(Gly) + glycine + ATP = glycyl-tRNA(Gly) + AMP + diphosphate. This is Glycine--tRNA ligase alpha subunit from Campylobacter jejuni subsp. doylei (strain ATCC BAA-1458 / RM4099 / 269.97).